We begin with the raw amino-acid sequence, 155 residues long: Cytochrome c-type biogenesis protein CcmE (155 aa).

Residues 1–8 (MNPLRKKR) lie on the Cytoplasmic side of the membrane. A helical; Signal-anchor for type II membrane protein transmembrane segment spans residues 9 to 29 (LLIIAALLAGVGLAMTLALGA). At 30–155 (LKENINLFYT…GGSSTPAKQG (126 aa)) the chain is on the periplasmic side. H124 and Y128 together coordinate heme. Positions 134–155 (TKALRDSGQAAPGGSSTPAKQG) are disordered.

This sequence belongs to the CcmE/CycJ family.

The protein resides in the cell inner membrane. In terms of biological role, heme chaperone required for the biogenesis of c-type cytochromes. Transiently binds heme delivered by CcmC and transfers the heme to apo-cytochromes in a process facilitated by CcmF and CcmH. The polypeptide is Cytochrome c-type biogenesis protein CcmE (Pseudomonas savastanoi pv. phaseolicola (strain 1448A / Race 6) (Pseudomonas syringae pv. phaseolicola (strain 1448A / Race 6))).